Here is a 143-residue protein sequence, read N- to C-terminus: Transcriptional regulator MraZ (143 aa).

SpoVT-AbrB domains are found at residues 5-47 (EYHH…PMQG) and 76-119 (ATEC…SRSR).

This sequence belongs to the MraZ family. As to quaternary structure, forms oligomers.

It localises to the cytoplasm. Its subcellular location is the nucleoid. The sequence is that of Transcriptional regulator MraZ from Moorella thermoacetica (strain ATCC 39073 / JCM 9320).